Consider the following 226-residue polypeptide: 2-C-methyl-D-erythritol 4-phosphate cytidylyltransferase (226 aa).

This sequence belongs to the IspD/TarI cytidylyltransferase family. IspD subfamily.

The enzyme catalyses 2-C-methyl-D-erythritol 4-phosphate + CTP + H(+) = 4-CDP-2-C-methyl-D-erythritol + diphosphate. Its pathway is isoprenoid biosynthesis; isopentenyl diphosphate biosynthesis via DXP pathway; isopentenyl diphosphate from 1-deoxy-D-xylulose 5-phosphate: step 2/6. In terms of biological role, catalyzes the formation of 4-diphosphocytidyl-2-C-methyl-D-erythritol from CTP and 2-C-methyl-D-erythritol 4-phosphate (MEP). This is 2-C-methyl-D-erythritol 4-phosphate cytidylyltransferase from Rhodococcus opacus (strain B4).